The primary structure comprises 224 residues: Deoxyribose-phosphate aldolase (224 aa).

D92 serves as the catalytic Proton donor/acceptor. The active-site Schiff-base intermediate with acetaldehyde is K155. K184 (proton donor/acceptor) is an active-site residue.

It belongs to the DeoC/FbaB aldolase family. DeoC type 1 subfamily.

The protein resides in the cytoplasm. The enzyme catalyses 2-deoxy-D-ribose 5-phosphate = D-glyceraldehyde 3-phosphate + acetaldehyde. It participates in carbohydrate degradation; 2-deoxy-D-ribose 1-phosphate degradation; D-glyceraldehyde 3-phosphate and acetaldehyde from 2-deoxy-alpha-D-ribose 1-phosphate: step 2/2. Catalyzes a reversible aldol reaction between acetaldehyde and D-glyceraldehyde 3-phosphate to generate 2-deoxy-D-ribose 5-phosphate. The sequence is that of Deoxyribose-phosphate aldolase from Halalkalibacterium halodurans (strain ATCC BAA-125 / DSM 18197 / FERM 7344 / JCM 9153 / C-125) (Bacillus halodurans).